The primary structure comprises 388 residues: Oxytocin receptor (388 aa).

The Extracellular portion of the chain corresponds to 1-38 (MEGTPAANWSIELDLGSGVPPGAEGNLTAGPPRRNEAL). 2 N-linked (GlcNAc...) asparagine glycosylation sites follow: Asn8 and Asn26. The helical transmembrane segment at 39–63 (ARVEVAVLCLILFLALSGNACVLLA) threads the bilayer. The Cytoplasmic segment spans residues 64 to 74 (LRTTRHKHSRL). Residues 75–97 (FFFMKHLSIADLVVAVFQVLPQL) form a helical membrane-spanning segment. At 98–113 (LWDITFRFYGPDLLCR) the chain is on the extracellular side. Cys112 and Cys187 are oxidised to a cystine. The helical transmembrane segment at 114–135 (LVKYLQVVGMFASTYLLLLMSL) threads the bilayer. Residues 136-154 (DRCLAICQPLRSLRRRTDR) lie on the Cytoplasmic side of the membrane. A helical transmembrane segment spans residues 155 to 175 (LAVLATWLGCLVASVPQVHIF). Over 176-202 (SLREVADGVFDCWAVFIQPWGPKAYVT) the chain is Extracellular. Residues 203–225 (WITLAVYIVPVIVLAACYGLISF) traverse the membrane as a helical segment. Topologically, residues 226–274 (KIWQNLRLKTAAAAAAAEGSDAAGGAGRAALARVSSVKLISKAKIRTVK) are cytoplasmic. The chain crosses the membrane as a helical span at residues 275 to 293 (MTFIIVLAFIVCWTPFFFV). Residues 294–308 (QMWSVWDVNAPKEAS) lie on the Extracellular side of the membrane. The chain crosses the membrane as a helical span at residues 309 to 331 (AFIIAMLLASLNSCCNPWIYMLF). At 332–388 (TGHLFHELVQRFLCCSARYLKGSRPGETSISKKSNSSTFVLSRRSSSQRSCSQPSSA) the chain is on the cytoplasmic side. A disordered region spans residues 354-388 (SRPGETSISKKSNSSTFVLSRRSSSQRSCSQPSSA). A phosphoserine mark is found at Ser365 and Ser367. Residues 365–388 (SNSSTFVLSRRSSSQRSCSQPSSA) show a composition bias toward low complexity.

The protein belongs to the G-protein coupled receptor 1 family. Vasopressin/oxytocin receptor subfamily.

It localises to the cell membrane. Functionally, receptor for oxytocin. The activity of this receptor is mediated by G proteins which activate a phosphatidylinositol-calcium second messenger system. This is Oxytocin receptor (Oxtr) from Mus musculus (Mouse).